A 360-amino-acid chain; its full sequence is tRNA (guanine-N(7)-)-methyltransferase (360 aa).

The interval M1 to E32 is disordered. S-adenosyl-L-methionine contacts are provided by residues G99 and E122–I123. Residues A177–V196 are disordered. A compositionally biased stretch (polar residues) spans V183–V196. S-adenosyl-L-methionine-binding positions include N209 to T210 and C229. D232 is a catalytic residue. S-adenosyl-L-methionine is bound at residue T332–E334.

This sequence belongs to the class I-like SAM-binding methyltransferase superfamily. TrmB family. In terms of assembly, forms a complex with trm82.

The protein localises to the nucleus. The catalysed reaction is guanosine(46) in tRNA + S-adenosyl-L-methionine = N(7)-methylguanosine(46) in tRNA + S-adenosyl-L-homocysteine. The protein operates within tRNA modification; N(7)-methylguanine-tRNA biosynthesis. Functionally, catalyzes the formation of N(7)-methylguanine at position 46 (m7G46) in tRNA. This Neosartorya fischeri (strain ATCC 1020 / DSM 3700 / CBS 544.65 / FGSC A1164 / JCM 1740 / NRRL 181 / WB 181) (Aspergillus fischerianus) protein is tRNA (guanine-N(7)-)-methyltransferase (trm8).